A 715-amino-acid polypeptide reads, in one-letter code: Forkhead box protein P2 (715 aa).

A compositionally biased stretch (polar residues) spans 1 to 28 (MMQESATETISNSSMNQNGMSTLSSQLD). Disordered regions lie at residues 1–46 (MMQE…EVST) and 281–339 (DNGI…TGAS). The segment covering 292–305 (TTNNSSSTTSSNTS) has biased composition (low complexity). A compositionally biased stretch (basic and acidic residues) spans 326-337 (ARRDSSSHEETG). The C2H2-type zinc-finger motif lies at 346-371 (GVCKWPGCESICEDFGQFLKHLNNEH). The interval 388–409 (VQQLEIQLSKERERLQAMMTHL) is leucine-zipper. The CTBP1-binding stretch occupies residues 422–426 (PLNLV). Positions 438–459 (TSPQSLPQTPTTPTAPVTPITQ) are enriched in low complexity. The disordered stretch occupies residues 438–465 (TSPQSLPQTPTTPTAPVTPITQGPSVIT). The segment at residues 504-594 (RPPFTYATLI…SQKITGSPTL (91 aa)) is a DNA-binding region (fork-head). Disordered regions lie at residues 649–668 (LDHIDSNGNSSPGCSPQPHI) and 678–715 (VIAEDEDCPMSLVTTANHSPELEDDREIEEEPLSEDLE). The span at 699-715 (LEDDREIEEEPLSEDLE) shows a compositional bias: acidic residues.

In terms of assembly, forms homodimers and heterodimers with FOXP1 and FOXP4. Dimerization is required for DNA-binding. Interacts with CTBP1. Interacts with FOXP1. Isoform 1 and isoform 3 interact with TBR1. Interacts with ZMYM2. As to expression, isoform 1 and isoform 6 are expressed in adult and fetal brain, caudate nucleus and lung.

It is found in the nucleus. Functionally, transcriptional repressor that may play a role in the specification and differentiation of lung epithelium. May also play a role in developing neural, gastrointestinal and cardiovascular tissues. Can act with CTBP1 to synergistically repress transcription but CTPBP1 is not essential. Plays a role in synapse formation by regulating SRPX2 levels. Involved in neural mechanisms mediating the development of speech and language. The protein is Forkhead box protein P2 (FOXP2) of Homo sapiens (Human).